The sequence spans 136 residues: Piercer of microtubule wall 1 protein (136 aa).

Basic and acidic residues predominate over residues Met-1–Lys-16. The interval Met-1–Trp-27 is disordered.

This sequence belongs to the PIERCE1 family. In terms of assembly, microtubule inner protein component of sperm flagellar doublet microtubules. Interacts with CFAP53, ODAD1 and ODAD3; the interactions link the outer dynein arms docking complex (ODA-DC) to the internal microtubule inner proteins (MIP) in cilium axoneme. As to expression, expressed in trachea multiciliated cells.

The protein localises to the cytoplasm. Its subcellular location is the cytoskeleton. The protein resides in the cilium axoneme. It localises to the flagellum axoneme. Microtubule inner protein involved in the attachment of outer dynein arms (ODAs) to dynein-decorated doublet microtubules (DMTs) in cilia axoneme, which is required for motile cilia beating. Functions at the initial step of left-right asymmetry specification of the visceral organs. This Bos taurus (Bovine) protein is Piercer of microtubule wall 1 protein (PIERCE1).